A 520-amino-acid chain; its full sequence is CUGBP Elav-like family member 4 (520 aa).

3 consecutive RRM domains span residues I47 to S128, R135 to T215, and C435 to P513.

It belongs to the CELF/BRUNOL family.

Its subcellular location is the nucleus. The protein localises to the cytoplasm. Functionally, RNA-binding protein that may be implicated in the regulation of pre-mRNA alternative splicing. The chain is CUGBP Elav-like family member 4 (celf4) from Danio rerio (Zebrafish).